Consider the following 223-residue polypeptide: Translation initiation factor 6 (223 aa).

The protein belongs to the eIF-6 family.

Functionally, binds to the 50S ribosomal subunit and prevents its association with the 30S ribosomal subunit to form the 70S initiation complex. The polypeptide is Translation initiation factor 6 (Methanobrevibacter smithii (strain ATCC 35061 / DSM 861 / OCM 144 / PS)).